The primary structure comprises 511 residues: 2-isopropylmalate synthase (511 aa).

The Pyruvate carboxyltransferase domain occupies L5–V267. Residues D14, H202, H204, and N238 each contribute to the Mn(2+) site. Residues K393–V511 form a regulatory domain region.

This sequence belongs to the alpha-IPM synthase/homocitrate synthase family. LeuA type 1 subfamily. As to quaternary structure, homodimer. Mn(2+) serves as cofactor.

The protein resides in the cytoplasm. The catalysed reaction is 3-methyl-2-oxobutanoate + acetyl-CoA + H2O = (2S)-2-isopropylmalate + CoA + H(+). It functions in the pathway amino-acid biosynthesis; L-leucine biosynthesis; L-leucine from 3-methyl-2-oxobutanoate: step 1/4. Functionally, catalyzes the condensation of the acetyl group of acetyl-CoA with 3-methyl-2-oxobutanoate (2-ketoisovalerate) to form 3-carboxy-3-hydroxy-4-methylpentanoate (2-isopropylmalate). This chain is 2-isopropylmalate synthase, found in Nitrosococcus oceani (strain ATCC 19707 / BCRC 17464 / JCM 30415 / NCIMB 11848 / C-107).